The sequence spans 418 residues: Histidine--tRNA ligase (418 aa).

This sequence belongs to the class-II aminoacyl-tRNA synthetase family.

The protein localises to the cytoplasm. It carries out the reaction tRNA(His) + L-histidine + ATP = L-histidyl-tRNA(His) + AMP + diphosphate + H(+). In Methanococcus maripaludis (strain C6 / ATCC BAA-1332), this protein is Histidine--tRNA ligase.